We begin with the raw amino-acid sequence, 388 residues long: Succinate--CoA ligase [ADP-forming] subunit beta (388 aa).

Positions 9–245 (KELLASYGLP…KSQENERELK (237 aa)) constitute an ATP-grasp domain. ATP contacts are provided by residues K46, 53-55 (GRG), E100, Y103, and E108. Mg(2+)-binding residues include N200 and D214. Substrate-binding positions include N265 and 322-324 (GIV).

Belongs to the succinate/malate CoA ligase beta subunit family. Heterotetramer of two alpha and two beta subunits. It depends on Mg(2+) as a cofactor.

It catalyses the reaction succinate + ATP + CoA = succinyl-CoA + ADP + phosphate. The enzyme catalyses GTP + succinate + CoA = succinyl-CoA + GDP + phosphate. It participates in carbohydrate metabolism; tricarboxylic acid cycle; succinate from succinyl-CoA (ligase route): step 1/1. Succinyl-CoA synthetase functions in the citric acid cycle (TCA), coupling the hydrolysis of succinyl-CoA to the synthesis of either ATP or GTP and thus represents the only step of substrate-level phosphorylation in the TCA. The beta subunit provides nucleotide specificity of the enzyme and binds the substrate succinate, while the binding sites for coenzyme A and phosphate are found in the alpha subunit. The polypeptide is Succinate--CoA ligase [ADP-forming] subunit beta (Neisseria meningitidis serogroup B (strain ATCC BAA-335 / MC58)).